The sequence spans 525 residues: Histidine-rich glycoprotein (525 aa).

Residues 1 to 18 form the signal peptide; that stretch reads MKVLTTALLLVTLQCSHA. Residues 19–122 form the Cystatin 1 domain; it reads LSPTNCDASE…ESQDLSVNGY (104 aa). Intrachain disulfides connect C24–C504, C78–C89, C103–C124, C201–C414, and C216–C239. Residues 41 to 84 are interaction with ATP5F1A; sequence GRRSGYVFELLRVSDAHLDRAGTATVYYLALDVIESDCWVLSTK. N-linked (GlcNAc...) asparagine glycosylation is found at N112, N123, and N200. The Cystatin 2 domain maps to 135–240; that stretch reads NTKDSPVLLD…TPDSIDINCE (106 aa). A disordered region spans residues 273–447; the sequence is GSRDHHHTHK…SRKRGPGKGL (175 aa). The span at 293–303 shows a compositional bias: basic and acidic residues; it reads EGKDNSDRPRL. 2 N-linked (GlcNAc...) asparagine glycosylation sites follow: N322 and N330. Basic residues predominate over residues 339 to 404; the sequence is HGHRPHGHHP…GHHPHGHHPH (66 aa). Positions 345–379 are necessary for endothelial cell focal adhesions and anti-angiogenic activities; the sequence is GHHPHSHHPPGHHSHGHHPHGHHPHSHHSHGHHPP. S438 is modified (phosphoserine).

In terms of assembly, interacts with THBS1 (via the TSP type I repeats); the interaction blocks the antiangiogenic effect of THBS1 with CD36. Interacts with HPSE; the interaction is enhanced at acidic pH, partially inhibits binding of HPSE to cell surface receptors and modulates its enzymatic activity. Interacts (via the HRR domain) with TMP1; the interaction partially mediates the antiangiogenic properties of HRG. Interacts with kappa and lambda light chains of IgG molecules. Interacts with ATP5F1A; the interaction occurs on the surface of T-cells and alters their cell morphology in concert with CONA. Binds IgG molecules containing kappa and lambda light chains and inhibits the formation of insoluble immunoglobulin complexes. Interacts with F12; the interaction, which is enhanced in the presence of zinc ions and inhibited by heparin-binding to HRG, inhibits factor XII autoactivation and contact-initiated coagulation. Interacts with PLG (via its Kringle domains); the interaction tethers PLG to the cell surface and enhances its activation. Interacts (via the HRR domain) with TPM1; the interaction appears to contribute to the antiangiogenic properties of the HRR domain. Interacts with THBS2; the interaction blocks the antiangiogenic effect of THBS2 with CD36. Requires Zn(2+) as cofactor. Proteolytic cleavage produces several HRG fragments which are mostly disulfide-linked and, therefore, not released. Cleavage by plasmin is inhibited in the presence of heparin, zinc ions or in an acidic environment. Cleavage reduces binding of HRG to heparan sulfate, but enhances the ability of HRG to bind and tether plasminogen to the cell surface. On platelet activation, releases a 33 kDa antiangiogenic peptide which encompasses the HRR. Also cleaved in the C-terminal by plasmin. Post-translationally, N-glycosylated. In terms of tissue distribution, expressed in liver, blood plasma, serum and in platelets. Also present in fibrin clots, wound fluid from acute wounds and chronic leg ulcers.

The protein resides in the secreted. Plasma glycoprotein that binds a number of ligands such as heme, heparin, heparan sulfate, thrombospondin, plasminogen, and divalent metal ions. Binds heparin and heparin/glycosaminoglycans in a zinc-dependent manner. Binds heparan sulfate on the surface of liver, lung, kidney and heart endothelial cells. Binds to N-sulfated polysaccharide chains on the surface of liver endothelial cells. Inhibits rosette formation. Acts as an adapter protein and is implicated in regulating many processes such as immune complex and pathogen clearance, cell chemotaxis, cell adhesion, angiogenesis, coagulation and fibrinolysis. Mediates clearance of necrotic cells through enhancing the phagocytosis of necrotic cells in a heparan sulfate-dependent pathway. This process can be regulated by the presence of certain HRG ligands such as heparin and zinc ions. Binds to IgG subclasses of immunoglobins containing kappa and lambda light chains with different affinities regulating their clearance and inhibiting the formation of insoluble immune complexes. Tethers plasminogen to the cell surface. Binds T-cells and alters the cell morphology. Acts as a regulator of the vascular endothelial growth factor (VEGF) signaling pathway; inhibits endothelial cell motility by reducing VEGF-induced complex formation between PXN/paxillin and ILK/integrin-linked protein kinase and by promoting inhibition of VEGF-induced tyrosine phosphorylation of focal adhesion kinases and alpha-actinins in endothelial cells. Also plays a role in the regulation of tumor angiogenesis and tumor immune surveillance. Normalizes tumor vessels and promotes antitumor immunity by polarizing tumor-associated macrophages, leading to decreased tumor growth and metastasis. Modulates angiogenesis by blocking the CD6-mediated antiangiongenic effect of thrombospondins, THBS1 and THBS2. The sequence is that of Histidine-rich glycoprotein (Hrg) from Mus musculus (Mouse).